The primary structure comprises 147 residues: Lysozyme C (147 aa).

The signal sequence occupies residues 1-17; that stretch reads MRSLLILVLCFLPLAAP. Residues 19–147 enclose the C-type lysozyme domain; that stretch reads KVYGRCELAA…VNVWIRGCRL (129 aa). Cystine bridges form between Cys-24–Cys-145, Cys-48–Cys-133, Cys-82–Cys-98, and Cys-94–Cys-112. Active-site residues include Glu-53 and Asp-70.

This sequence belongs to the glycosyl hydrolase 22 family. As to quaternary structure, monomer. Post-translationally, by an evolutionary shift in the site of proteolytic cleavage of prelysozyme, Gly-18 became the N-terminal residue of the mature protein instead of being the C-terminal residue of the signal sequence as in other birds.

It localises to the secreted. The enzyme catalyses Hydrolysis of (1-&gt;4)-beta-linkages between N-acetylmuramic acid and N-acetyl-D-glucosamine residues in a peptidoglycan and between N-acetyl-D-glucosamine residues in chitodextrins.. In terms of biological role, lysozymes have primarily a bacteriolytic function; those in tissues and body fluids are associated with the monocyte-macrophage system and enhance the activity of immunoagents. This chain is Lysozyme C (LYZ), found in Phasianus colchicus colchicus (Black-necked pheasant).